Reading from the N-terminus, the 66-residue chain is Cold shock protein 2 (66 aa).

The CSD domain occupies 4–63 (GTVKWFNADKGFGFITGEDGTDVFVHFSAIQTDGFKTLDEGQKVTYDEEQGDRGPQATNV).

Its subcellular location is the cytoplasm. This chain is Cold shock protein 2 (cspL), found in Lactiplantibacillus plantarum (strain ATCC BAA-793 / NCIMB 8826 / WCFS1) (Lactobacillus plantarum).